The chain runs to 420 residues: ATP phosphoribosyltransferase regulatory subunit (420 aa).

The protein belongs to the class-II aminoacyl-tRNA synthetase family. HisZ subfamily. In terms of assembly, heteromultimer composed of HisG and HisZ subunits.

The protein resides in the cytoplasm. The protein operates within amino-acid biosynthesis; L-histidine biosynthesis; L-histidine from 5-phospho-alpha-D-ribose 1-diphosphate: step 1/9. In terms of biological role, required for the first step of histidine biosynthesis. May allow the feedback regulation of ATP phosphoribosyltransferase activity by histidine. This chain is ATP phosphoribosyltransferase regulatory subunit, found in Bacillus cereus (strain ATCC 10987 / NRS 248).